The following is a 323-amino-acid chain: Elongation factor P--(R)-beta-lysine ligase (323 aa).

Substrate is bound at residue 76–78 (SPE). Residues 100 to 102 (RNE) and N109 each bind ATP. Y118 contacts substrate. 242-243 (EL) contacts ATP. A substrate-binding site is contributed by E249. An ATP-binding site is contributed by G298.

Belongs to the class-II aminoacyl-tRNA synthetase family. EpmA subfamily. In terms of assembly, homodimer.

It catalyses the reaction D-beta-lysine + L-lysyl-[protein] + ATP = N(6)-((3R)-3,6-diaminohexanoyl)-L-lysyl-[protein] + AMP + diphosphate + H(+). In terms of biological role, with EpmB is involved in the beta-lysylation step of the post-translational modification of translation elongation factor P (EF-P). Catalyzes the ATP-dependent activation of (R)-beta-lysine produced by EpmB, forming a lysyl-adenylate, from which the beta-lysyl moiety is then transferred to the epsilon-amino group of a conserved specific lysine residue in EF-P. The sequence is that of Elongation factor P--(R)-beta-lysine ligase from Mannheimia succiniciproducens (strain KCTC 0769BP / MBEL55E).